A 438-amino-acid chain; its full sequence is Histidine--tRNA ligase (438 aa).

It belongs to the class-II aminoacyl-tRNA synthetase family. As to quaternary structure, homodimer.

It is found in the cytoplasm. The catalysed reaction is tRNA(His) + L-histidine + ATP = L-histidyl-tRNA(His) + AMP + diphosphate + H(+). The polypeptide is Histidine--tRNA ligase (Aromatoleum aromaticum (strain DSM 19018 / LMG 30748 / EbN1) (Azoarcus sp. (strain EbN1))).